We begin with the raw amino-acid sequence, 374 residues long: MRNPKLKNLLAPTLLSLAMFAGATQAAAPLRPPQGYFAPVDKFKTGDKSDGCDAMPAPYTGPLQFRSKYEGSDKARATLNVQSEKAFRDTTKDITTLERGTAKRVMQFMRDGRPEQLECTLNWLTAWAKADALMSKDFNHTGKSMRKWALGSMASSYIRLKFSDSHPLAQHQQEAQLIEAWFSKMADQVVSDWDNLPLEKTNNHSYWAAWSVMATAVATNRRDLFDWAVKEYKVGVNQVDADGFLPNELKRQQRALAYHNYALPPLAMIASFAQINGVDLRQENNGALKRLGDRVLAGVKDPDEFEEKNGKKQDMTDLKEDMKFAWLEPFCTLYTCAPDVIEKKRDMQPFKTFRLGGDLTKVYDPSHEKGNKGS.

Residues methionine 1–alanine 26 form the signal peptide. Residues serine 67 to lysine 68, histidine 140 to threonine 141, and tyrosine 258 contribute to the substrate site.

Belongs to the polysaccharide lyase 5 family.

Its subcellular location is the periplasm. It catalyses the reaction Eliminative cleavage of alginate to give oligosaccharides with 4-deoxy-alpha-L-erythro-hex-4-enuronosyl groups at their non-reducing ends and beta-D-mannuronate at their reducing end.. Functionally, catalyzes the depolymerization of alginate by cleaving the beta-1,4 glycosidic bond between two adjacent sugar residues via a beta-elimination mechanism. May serve to degrade mislocalized alginate that is trapped in the periplasmic space. The protein is Alginate lyase of Cobetia marina (Deleya marina).